Here is a 255-residue protein sequence, read N- to C-terminus: Pyridoxine 5'-phosphate synthase (255 aa).

3-amino-2-oxopropyl phosphate contacts are provided by N8 and R19. The active-site Proton acceptor is H44. Residues R46 and H51 each contribute to the 1-deoxy-D-xylulose 5-phosphate site. E74 serves as the catalytic Proton acceptor. T111 contacts 1-deoxy-D-xylulose 5-phosphate. H202 acts as the Proton donor in catalysis. Residues D203 and 225–226 (GH) each bind 3-amino-2-oxopropyl phosphate.

The protein belongs to the PNP synthase family. Homooctamer; tetramer of dimers.

The protein localises to the cytoplasm. The enzyme catalyses 3-amino-2-oxopropyl phosphate + 1-deoxy-D-xylulose 5-phosphate = pyridoxine 5'-phosphate + phosphate + 2 H2O + H(+). It participates in cofactor biosynthesis; pyridoxine 5'-phosphate biosynthesis; pyridoxine 5'-phosphate from D-erythrose 4-phosphate: step 5/5. Functionally, catalyzes the complicated ring closure reaction between the two acyclic compounds 1-deoxy-D-xylulose-5-phosphate (DXP) and 3-amino-2-oxopropyl phosphate (1-amino-acetone-3-phosphate or AAP) to form pyridoxine 5'-phosphate (PNP) and inorganic phosphate. The polypeptide is Pyridoxine 5'-phosphate synthase (Xanthomonas axonopodis pv. citri (strain 306)).